A 79-amino-acid chain; its full sequence is Small ribosomal subunit protein bS18 (79 aa).

The protein belongs to the bacterial ribosomal protein bS18 family. As to quaternary structure, part of the 30S ribosomal subunit. Forms a tight heterodimer with protein bS6.

Functionally, binds as a heterodimer with protein bS6 to the central domain of the 16S rRNA, where it helps stabilize the platform of the 30S subunit. This chain is Small ribosomal subunit protein bS18, found in Blochmanniella pennsylvanica (strain BPEN).